Consider the following 240-residue polypeptide: UDP-2,3-diacylglucosamine hydrolase (240 aa).

Mn(2+) is bound by residues D8, H10, D41, N79, and H114. A substrate-binding site is contributed by 79-80; it reads NR. Residues D122, S160, N164, K167, and H195 each coordinate substrate. Mn(2+) contacts are provided by H195 and H197.

It belongs to the LpxH family. Mn(2+) is required as a cofactor.

It is found in the cell inner membrane. The enzyme catalyses UDP-2-N,3-O-bis[(3R)-3-hydroxytetradecanoyl]-alpha-D-glucosamine + H2O = 2-N,3-O-bis[(3R)-3-hydroxytetradecanoyl]-alpha-D-glucosaminyl 1-phosphate + UMP + 2 H(+). The protein operates within glycolipid biosynthesis; lipid IV(A) biosynthesis; lipid IV(A) from (3R)-3-hydroxytetradecanoyl-[acyl-carrier-protein] and UDP-N-acetyl-alpha-D-glucosamine: step 4/6. Hydrolyzes the pyrophosphate bond of UDP-2,3-diacylglucosamine to yield 2,3-diacylglucosamine 1-phosphate (lipid X) and UMP by catalyzing the attack of water at the alpha-P atom. Involved in the biosynthesis of lipid A, a phosphorylated glycolipid that anchors the lipopolysaccharide to the outer membrane of the cell. In Pectobacterium carotovorum subsp. carotovorum (strain PC1), this protein is UDP-2,3-diacylglucosamine hydrolase.